The chain runs to 931 residues: Isoleucine--tRNA ligase (931 aa).

Positions 57 to 67 (PYANGNIHIGH) match the 'HIGH' region motif. Residue glutamate 555 participates in L-isoleucyl-5'-AMP binding. A 'KMSKS' region motif is present at residues 596–600 (KMSKS). Lysine 599 contributes to the ATP binding site. 4 residues coordinate Zn(2+): cysteine 890, cysteine 893, cysteine 910, and cysteine 913.

It belongs to the class-I aminoacyl-tRNA synthetase family. IleS type 1 subfamily. In terms of assembly, monomer. Requires Zn(2+) as cofactor.

The protein resides in the cytoplasm. The enzyme catalyses tRNA(Ile) + L-isoleucine + ATP = L-isoleucyl-tRNA(Ile) + AMP + diphosphate. Its function is as follows. Catalyzes the attachment of isoleucine to tRNA(Ile). As IleRS can inadvertently accommodate and process structurally similar amino acids such as valine, to avoid such errors it has two additional distinct tRNA(Ile)-dependent editing activities. One activity is designated as 'pretransfer' editing and involves the hydrolysis of activated Val-AMP. The other activity is designated 'posttransfer' editing and involves deacylation of mischarged Val-tRNA(Ile). This Limosilactobacillus reuteri subsp. reuteri (strain JCM 1112) (Lactobacillus reuteri) protein is Isoleucine--tRNA ligase.